The following is a 463-amino-acid chain: MPPPSLLLLHPRTPLPHHHRSSFRTSSPRPSRMVCAAAEGFISAAPILLPDGPWKQVEGGVTAAKGFKAAGIYGGLRAKGEKPDLALVACDVDATVAGAFTTNVVAAAPVLYCKRVLNSSKTARAVLINAGQANAATGDAGYQDTVDSADAVAKLLNVSTNDILIQSTGVIGQRIKKEALVNSLHRLVGSLSSSIEGANSAAVAITTTDLVSKSIAVQTEIGGVPIKIGGMAKGSGMIHPNMATMLGVLTTDAQVSSDVWREMVRTSVSRSFNQITVDGDTSTNDCVIALASGLSGLSSILTHDSTEAQQFQACLDAVMQGLAKSIAWDGEGATCLIEVTVAGANNEAEAAKIARSVASSSLVKAAVFGRDPNWGRIACSVGYSGIQFDADQLDISLGAIPLMKNGQPLPFDRSAASKYLKDAGDIHGTVNIDVSVGRGGGSGKAWGCDLSYKYVEINAEYTT.

6 residues coordinate substrate: Thr207, Lys233, Thr244, Glu331, Asn458, and Thr463. The active-site Nucleophile is the Thr244.

This sequence belongs to the ArgJ family. In terms of assembly, heterodimer of an alpha and a beta chain.

It is found in the plastid. It localises to the chloroplast. It carries out the reaction N(2)-acetyl-L-ornithine + L-glutamate = N-acetyl-L-glutamate + L-ornithine. The catalysed reaction is L-glutamate + acetyl-CoA = N-acetyl-L-glutamate + CoA + H(+). It participates in amino-acid biosynthesis; L-arginine biosynthesis; L-ornithine and N-acetyl-L-glutamate from L-glutamate and N(2)-acetyl-L-ornithine (cyclic): step 1/1. The protein operates within amino-acid biosynthesis; L-arginine biosynthesis; N(2)-acetyl-L-ornithine from L-glutamate: step 1/4. In terms of biological role, catalyzes two activities which are involved in the cyclic version of arginine biosynthesis: the synthesis of acetylglutamate from glutamate and acetyl-CoA, and of ornithine by transacetylation between acetylornithine and glutamate. This is Arginine biosynthesis bifunctional protein ArgJ, chloroplastic from Oryza sativa subsp. japonica (Rice).